The primary structure comprises 144 residues: Granulocyte-macrophage colony-stimulating factor (144 aa).

Residues 1–17 form the signal peptide; sequence MWLQNLLLLGTVVCSIS. The O-linked (GalNAc...) serine glycan is linked to Ser-24. An O-linked (GalNAc...) threonine glycan is attached at Thr-27. N-linked (GlcNAc...) asparagine glycosylation is found at Asn-44, Asn-47, and Asn-54. 2 cysteine pairs are disulfide-bonded: Cys-71–Cys-113 and Cys-105–Cys-138.

This sequence belongs to the GM-CSF family. In terms of assembly, monomer. The signaling GM-CSF receptor complex is a dodecamer of two head-to-head hexamers of two alpha, two beta, and two ligand subunits.

It is found in the secreted. In terms of biological role, cytokine that stimulates the growth and differentiation of hematopoietic precursor cells from various lineages, including granulocytes, macrophages, eosinophils and erythrocytes. The sequence is that of Granulocyte-macrophage colony-stimulating factor (CSF2) from Sus scrofa (Pig).